A 202-amino-acid polypeptide reads, in one-letter code: uncharacterized protein (202 aa).

Residues 1 to 6 lie on the Cytoplasmic side of the membrane; that stretch reads MITDFL. Residues 7-23 form a helical; Signal-anchor for type II membrane protein membrane-spanning segment; sequence LAFSILAVSTTLGVSNL. At 24–202 the chain is on the extracellular side; sequence NKQCRDLLQC…KNGKTRGHSG (179 aa). Residue asparagine 53 is glycosylated (N-linked (GlcNAc...) asparagine).

The protein localises to the membrane. This is an uncharacterized protein from Caenorhabditis elegans.